The following is a 259-amino-acid chain: 5'-nucleotidase SurE (259 aa).

The a divalent metal cation site is built by D8, D9, S39, and N96.

It belongs to the SurE nucleotidase family. A divalent metal cation is required as a cofactor.

The protein localises to the cytoplasm. The catalysed reaction is a ribonucleoside 5'-phosphate + H2O = a ribonucleoside + phosphate. Its function is as follows. Nucleotidase that shows phosphatase activity on nucleoside 5'-monophosphates. In Pelotomaculum thermopropionicum (strain DSM 13744 / JCM 10971 / SI), this protein is 5'-nucleotidase SurE.